Here is a 126-residue protein sequence, read N- to C-terminus: Fluoride-specific ion channel FluC (126 aa).

Helical transmembrane passes span 5–25 (GFVA…FFSV), 36–56 (YGTL…VAFF), 69–89 (LAVT…SEVI), and 99–119 (WAML…AFGI). Residues Gly-76 and Thr-79 each contribute to the Na(+) site.

Belongs to the fluoride channel Fluc/FEX (TC 1.A.43) family.

The protein localises to the cell inner membrane. It carries out the reaction fluoride(in) = fluoride(out). With respect to regulation, na(+) is not transported, but it plays an essential structural role and its presence is essential for fluoride channel function. Fluoride-specific ion channel. Important for reducing fluoride concentration in the cell, thus reducing its toxicity. This Cupriavidus metallidurans (strain ATCC 43123 / DSM 2839 / NBRC 102507 / CH34) (Ralstonia metallidurans) protein is Fluoride-specific ion channel FluC.